A 905-amino-acid polypeptide reads, in one-letter code: Protein translocase subunit SecA (905 aa).

ATP contacts are provided by residues Gln-89, 107 to 111 (GEGKT), and Asp-502. A disordered region spans residues 837-885 (EQTDVGDPILNDQNKKNSSTLWTPSQENKFVNPKDRNPSDSTTWGKVGR). The segment covering 852–865 (KNSSTLWTPSQENK) has biased composition (polar residues). Zn(2+)-binding residues include Cys-889, Cys-891, Cys-900, and His-901.

The protein belongs to the SecA family. In terms of assembly, monomer and homodimer. Part of the essential Sec protein translocation apparatus which comprises SecA, SecYEG and auxiliary proteins SecDF-YajC and YidC. It depends on Zn(2+) as a cofactor.

It localises to the cell inner membrane. Its subcellular location is the cytoplasm. It catalyses the reaction ATP + H2O + cellular proteinSide 1 = ADP + phosphate + cellular proteinSide 2.. Its function is as follows. Part of the Sec protein translocase complex. Interacts with the SecYEG preprotein conducting channel. Has a central role in coupling the hydrolysis of ATP to the transfer of proteins into and across the cell membrane, serving both as a receptor for the preprotein-SecB complex and as an ATP-driven molecular motor driving the stepwise translocation of polypeptide chains across the membrane. This Bartonella henselae (strain ATCC 49882 / DSM 28221 / CCUG 30454 / Houston 1) (Rochalimaea henselae) protein is Protein translocase subunit SecA.